The following is a 603-amino-acid chain: Probable methyltransferase PMT20 (603 aa).

Topologically, residues 1-16 (MKSGKQSSQPEKGTSR) are cytoplasmic. A helical; Signal-anchor for type II membrane protein membrane pass occupies residues 17–37 (ILSLTVLFIAFCGFSFYLGGI). Over 38-603 (FCSERDKIVA…KLWFSSNQTS (566 aa)) the chain is Lumenal. Asn-313 and Asn-600 each carry an N-linked (GlcNAc...) asparagine glycan.

The protein belongs to the methyltransferase superfamily.

The protein localises to the golgi apparatus membrane. The sequence is that of Probable methyltransferase PMT20 from Arabidopsis thaliana (Mouse-ear cress).